A 295-amino-acid polypeptide reads, in one-letter code: NAD kinase (295 aa).

The Proton acceptor role is filled by Asp-74. NAD(+)-binding positions include 74–75 (DG), 148–149 (NE), Arg-176, Asp-178, and 189–194 (TAYAMS).

The protein belongs to the NAD kinase family. It depends on a divalent metal cation as a cofactor.

It localises to the cytoplasm. It carries out the reaction NAD(+) + ATP = ADP + NADP(+) + H(+). Its function is as follows. Involved in the regulation of the intracellular balance of NAD and NADP, and is a key enzyme in the biosynthesis of NADP. Catalyzes specifically the phosphorylation on 2'-hydroxyl of the adenosine moiety of NAD to yield NADP. This is NAD kinase from Acidithiobacillus ferrooxidans (strain ATCC 23270 / DSM 14882 / CIP 104768 / NCIMB 8455) (Ferrobacillus ferrooxidans (strain ATCC 23270)).